The chain runs to 325 residues: Lipoyl synthase (325 aa).

The interval 1 to 31 is disordered; the sequence is MANLIDNTARSAASDARAARHPEKQKRADTP. Positions 17–31 are enriched in basic and acidic residues; it reads RAARHPEKQKRADTP. 7 residues coordinate [4Fe-4S] cluster: cysteine 65, cysteine 70, cysteine 76, cysteine 91, cysteine 95, cysteine 98, and serine 304. The region spanning 77–293 is the Radical SAM core domain; that stretch reads WEQKHATFMI…ETIARAKGFL (217 aa).

It belongs to the radical SAM superfamily. Lipoyl synthase family. It depends on [4Fe-4S] cluster as a cofactor.

Its subcellular location is the cytoplasm. The enzyme catalyses [[Fe-S] cluster scaffold protein carrying a second [4Fe-4S](2+) cluster] + N(6)-octanoyl-L-lysyl-[protein] + 2 oxidized [2Fe-2S]-[ferredoxin] + 2 S-adenosyl-L-methionine + 4 H(+) = [[Fe-S] cluster scaffold protein] + N(6)-[(R)-dihydrolipoyl]-L-lysyl-[protein] + 4 Fe(3+) + 2 hydrogen sulfide + 2 5'-deoxyadenosine + 2 L-methionine + 2 reduced [2Fe-2S]-[ferredoxin]. It participates in protein modification; protein lipoylation via endogenous pathway; protein N(6)-(lipoyl)lysine from octanoyl-[acyl-carrier-protein]: step 2/2. Catalyzes the radical-mediated insertion of two sulfur atoms into the C-6 and C-8 positions of the octanoyl moiety bound to the lipoyl domains of lipoate-dependent enzymes, thereby converting the octanoylated domains into lipoylated derivatives. The protein is Lipoyl synthase of Maricaulis maris (strain MCS10) (Caulobacter maris).